A 186-amino-acid chain; its full sequence is Elongation factor P (186 aa).

Belongs to the elongation factor P family.

Its subcellular location is the cytoplasm. Its pathway is protein biosynthesis; polypeptide chain elongation. Functionally, involved in peptide bond synthesis. Stimulates efficient translation and peptide-bond synthesis on native or reconstituted 70S ribosomes in vitro. Probably functions indirectly by altering the affinity of the ribosome for aminoacyl-tRNA, thus increasing their reactivity as acceptors for peptidyl transferase. The chain is Elongation factor P from Thiobacillus denitrificans (strain ATCC 25259 / T1).